Consider the following 793-residue polypeptide: Putative dipeptidyl aminopeptidase C2E11.08 (793 aa).

Topologically, residues 1 to 24 (MNDFSFEDKGLISRSGFGSRHVRR) are cytoplasmic. Residues 25 to 45 (VVKALALIFSLLILYLTISNV) traverse the membrane as a helical; Signal-anchor for type II membrane protein segment. At 46–793 (SDSPPKRDSL…STGVRQHRWD (748 aa)) the chain is on the lumenal side. N-linked (GlcNAc...) asparagine glycosylation is found at Asn-101, Asn-136, Asn-246, Asn-299, Asn-303, Asn-324, Asn-336, Asn-377, Asn-384, Asn-407, and Asn-535. Catalysis depends on charge relay system residues Ser-647, Asp-722, and His-755. Asn-761 carries N-linked (GlcNAc...) asparagine glycosylation.

Belongs to the peptidase S9B family.

The protein localises to the vacuole membrane. This Schizosaccharomyces pombe (strain 972 / ATCC 24843) (Fission yeast) protein is Putative dipeptidyl aminopeptidase C2E11.08.